The following is a 224-amino-acid chain: Dehydration-responsive element-binding protein 1G (224 aa).

Positions 1-16 are enriched in polar residues; it reads MDVSAALSSDYSSGTP. The interval 1–46 is disordered; sequence MDVSAALSSDYSSGTPSPVAADADDGSSAYMTVSSAPPKRRAGRTK. A DNA-binding region (AP2/ERF) is located at residues 54–111; sequence VFKGVRRRNPGRWVCEVREPHGKQRIWLGTFETAEMAARAHDVAALALRGRAACLNFA. Disordered stretches follow at residues 139–161 and 200–224; these read AFRP…SGAT and PPMA…LWSY.

This sequence belongs to the AP2/ERF transcription factor family. ERF subfamily.

It localises to the nucleus. Functionally, transcriptional activator that binds specifically to the DNA sequence 5'-[AG]CCGAC-3'. Binding to the C-repeat/DRE element mediates high salinity- and dehydration-inducible transcription. This chain is Dehydration-responsive element-binding protein 1G (DREB1G), found in Oryza sativa subsp. japonica (Rice).